A 412-amino-acid polypeptide reads, in one-letter code: Adenosine receptor A2a (412 aa).

The Extracellular segment spans residues 1–7 (MSTMGSW). The chain crosses the membrane as a helical span at residues 8 to 32 (VYITVELAIAVLAILGNVLVCWAVW). The Cytoplasmic segment spans residues 33–42 (LNSNLQNVTN). Residues 43-66 (YFVVSLAAADIAVGVLAIPFAITI) traverse the membrane as a helical segment. Topologically, residues 67-77 (STGFCAACHNC) are extracellular. Disulfide bonds link C71-C159, C74-C146, and C77-C166. The helical transmembrane segment at 78-100 (LFFACFVLVLTQSSIFSLLAIAI) threads the bilayer. The Cytoplasmic segment spans residues 101-120 (DRYIAIRIPLRYNGLVTGTR). The chain crosses the membrane as a helical span at residues 121-143 (AKGIIAVCWVLSFAIGLTPMLGW). Residues 144-173 (NNCSQPKEGRNYSQGCGEGQVACLFEDVVP) lie on the Extracellular side of the membrane. N145 and N154 each carry an N-linked (GlcNAc...) asparagine glycan. E169 lines the adenosine pocket. The helical transmembrane segment at 174–198 (MNYMVYYNFFAFVLVPLLLMLGVYL) threads the bilayer. Over 199–234 (RIFLAARRQLKQMESQPLPGERARSTLQKEVHAAKS) the chain is Cytoplasmic. A helical transmembrane segment spans residues 235 to 258 (LAIIVGLFALCWLPLHIINCFTFF). N253 provides a ligand contact to adenosine. C259 and C262 are joined by a disulfide. Residues 259–266 (CPECSHAP) are Extracellular-facing. Residues 267–290 (LWLMYLTIVLSHTNSVVNPFIYAY) traverse the membrane as a helical segment. 2 residues coordinate adenosine: S277 and H278. Residues 291–412 (RIREFRQTFR…PLAQDGAGVS (122 aa)) are Cytoplasmic-facing. The interval 392-412 (GACPESPGLEGPLAQDGAGVS) is disordered.

Belongs to the G-protein coupled receptor 1 family. As to quaternary structure, interacts (via cytoplasmic C-terminal domain) with USP4; the interaction is direct. May interact with DRD4. Interacts with NECAB2. Interacts (via cytoplasmic C-terminal domain) with GAS2L2; interaction enhances receptor-mediated adenylyl cyclase activity. In terms of processing, ubiquitinated. Deubiquitinated by USP4; leading to stabilization and expression at the cell surface.

It localises to the cell membrane. Its function is as follows. Receptor for adenosine. The activity of this receptor is mediated by G proteins which activate adenylyl cyclase. This chain is Adenosine receptor A2a (ADORA2A), found in Canis lupus familiaris (Dog).